The chain runs to 540 residues: Chaperonin GroEL 2 (540 aa).

ATP contacts are provided by residues 30–33 (TLGP), Lys-51, 87–91 (DGTTT), Gly-415, 480–482 (NAL), and Asp-496.

The protein belongs to the chaperonin (HSP60) family. In terms of assembly, forms a cylinder of 14 subunits composed of two heptameric rings stacked back-to-back. Interacts with the co-chaperonin GroES.

It localises to the cytoplasm. The catalysed reaction is ATP + H2O + a folded polypeptide = ADP + phosphate + an unfolded polypeptide.. Functionally, together with its co-chaperonin GroES, plays an essential role in assisting protein folding. The GroEL-GroES system forms a nano-cage that allows encapsulation of the non-native substrate proteins and provides a physical environment optimized to promote and accelerate protein folding. This Protochlamydia amoebophila (strain UWE25) protein is Chaperonin GroEL 2.